The primary structure comprises 119 residues: Large ribosomal subunit protein uL18 (119 aa).

It belongs to the universal ribosomal protein uL18 family. Part of the 50S ribosomal subunit; part of the 5S rRNA/L5/L18/L25 subcomplex. Contacts the 5S and 23S rRNAs.

Its function is as follows. This is one of the proteins that bind and probably mediate the attachment of the 5S RNA into the large ribosomal subunit, where it forms part of the central protuberance. The protein is Large ribosomal subunit protein uL18 of Endomicrobium trichonymphae.